A 313-amino-acid polypeptide reads, in one-letter code: Aspartate carbamoyltransferase catalytic subunit (313 aa).

Carbamoyl phosphate contacts are provided by R53 and T54. Residue K82 coordinates L-aspartate. The carbamoyl phosphate site is built by R103, H131, and Q134. R163 and R224 together coordinate L-aspartate. 2 residues coordinate carbamoyl phosphate: L263 and P264.

Belongs to the aspartate/ornithine carbamoyltransferase superfamily. ATCase family. Heterooligomer of catalytic and regulatory chains.

The enzyme catalyses carbamoyl phosphate + L-aspartate = N-carbamoyl-L-aspartate + phosphate + H(+). It functions in the pathway pyrimidine metabolism; UMP biosynthesis via de novo pathway; (S)-dihydroorotate from bicarbonate: step 2/3. Catalyzes the condensation of carbamoyl phosphate and aspartate to form carbamoyl aspartate and inorganic phosphate, the committed step in the de novo pyrimidine nucleotide biosynthesis pathway. In Halorubrum lacusprofundi (strain ATCC 49239 / DSM 5036 / JCM 8891 / ACAM 34), this protein is Aspartate carbamoyltransferase catalytic subunit.